The primary structure comprises 362 residues: Probable peptidyl-prolyl cis-trans isomerase C27F1.06c (362 aa).

Position 69 is a phosphoserine (serine 69). Residues 144-274 (DEFSSDEEEM…KVKGDGPAAK (131 aa)) form a disordered region. Acidic residues-rich tracts occupy residues 146 to 167 (FSSD…EEEE) and 175 to 189 (LNSD…EEEI). Serine 177 carries the phosphoserine modification. Basic and acidic residues predominate over residues 190–218 (LEKPVPKDEVAEKHSKDKLKKEEKEKKTA). One can recognise a PPIase FKBP-type domain in the interval 276 to 362 (KKRVSMRYIG…VFDVKLLAVN (87 aa)).

The protein belongs to the FKBP-type PPIase family. FKBP3/4 subfamily.

The enzyme catalyses [protein]-peptidylproline (omega=180) = [protein]-peptidylproline (omega=0). Functionally, PPIases accelerate the folding of proteins. It catalyzes the cis-trans isomerization of proline imidic peptide bonds in oligopeptides. This is Probable peptidyl-prolyl cis-trans isomerase C27F1.06c from Schizosaccharomyces pombe (strain 972 / ATCC 24843) (Fission yeast).